The following is a 312-amino-acid chain: MQRKLDSEPLRTRIYIDGYNFYYGCLRGTPYKWLDLLPLFEKHILPSILVTDNHGQIRAWRLLESPSIKYFTAKIIESVARAGDSVSSQARYHTALRKLHDGRIELIEGYYAVNKMKVKIVDPENPDKAPRECREIQAWKVEEKQSDVNLALQAYHDSITGQVDHAVIVTNDTDIAPALQMIRAHTDVRIGVVVPTSGQNRSANTDLIKFAHWKREHINSGELAACQLPRVIPGRKPTIKPESWYGQPELLQEILDLAIPVRGSRAAAFKWMEQPNQFLSGERPIELVETAEGATRVLQYIHSWIAQQEELP.

Residues 14 to 210 (IYIDGYNFYY…RSANTDLIKF (197 aa)) enclose the NYN domain.

The enzyme catalyses 4-(6-hydroxypyridin-3-yl)-4-oxobutanoate + 2 NADH + O2 + 2 H(+) = 2,5-dihydroxypyridine + succinate semialdehyde + 2 NAD(+) + H2O. Its pathway is alkaloid degradation; nicotine degradation. Its function is as follows. Involved in the nicotine degradation. Catalyzes the cleavage of 6-hydroxy-3-succinoylpyridine (HSP) by incorporation of oxygen at the 3-position to produce to 2,5-dihydroxypyridine (DHP) and succinic semialdehyde. The protein is 6-hydroxy-3-succinoylpyridine 3-monooxygenase HspA of Pseudomonas putida (strain DSM 28022 / S16).